The sequence spans 484 residues: Ankyrin repeat protein T5 (484 aa).

ANK repeat units follow at residues 33 to 64 (MDDTPFSLYLTRYDCTLETLRLFLKRGVDVNG), 68 to 102 (TRTSPLCTVLSNKELGKEAETLAMCLIDAGADVNA), 106 to 138 (DGRYPLLCLLENDRINTTSFVKYMIDRGTLVCV), 142 to 173 (DGCGPIQTYLRSKNVVLETLHVLVRAGASIHD), 178 to 211 (YGFNILQCYMISHVRSSDVRILRFLAGQGVNSSQ), 251 to 280 (LDFTPINYCVIHNDRRTFDYLLEKGANPNV), and 284 to 313 (LGNSCLDLAVLNGNKYMTLRLLRKTITPDA).

This is Ankyrin repeat protein T5 from Rabbit fibroma virus (strain Kasza) (RFV).